Consider the following 165-residue polypeptide: Transmembrane protein 128 (165 aa).

Transmembrane regions (helical) follow at residues 49-69, 81-101, 119-139, and 144-164; these read NIHS…VDFF, WFLC…YCIV, LIPI…IALW, and FFTP…ITLL.

Its subcellular location is the membrane. This Homo sapiens (Human) protein is Transmembrane protein 128 (TMEM128).